The chain runs to 288 residues: Bifunctional protein FolD (288 aa).

Residues glycine 164–serine 166 and isoleucine 230 each bind NADP(+).

The protein belongs to the tetrahydrofolate dehydrogenase/cyclohydrolase family. In terms of assembly, homodimer.

The enzyme catalyses (6R)-5,10-methylene-5,6,7,8-tetrahydrofolate + NADP(+) = (6R)-5,10-methenyltetrahydrofolate + NADPH. It carries out the reaction (6R)-5,10-methenyltetrahydrofolate + H2O = (6R)-10-formyltetrahydrofolate + H(+). It functions in the pathway one-carbon metabolism; tetrahydrofolate interconversion. Its function is as follows. Catalyzes the oxidation of 5,10-methylenetetrahydrofolate to 5,10-methenyltetrahydrofolate and then the hydrolysis of 5,10-methenyltetrahydrofolate to 10-formyltetrahydrofolate. The sequence is that of Bifunctional protein FolD from Mycoplasma mycoides subsp. mycoides SC (strain CCUG 32753 / NCTC 10114 / PG1).